The sequence spans 893 residues: cGMP-specific 3',5'-cyclic phosphodiesterase (893 aa).

GAF domains follow at residues 21–173 and 205–390; these read DIDV…GIGI and NLEC…GLGI. One can recognise a PDEase domain in the interval 420 to 743; the sequence is GQDQTEKLIQ…RNWQDLAEKV (324 aa). The active-site Proton donor is His-496. His-500, His-536, Asp-537, and Asp-647 together coordinate a divalent metal cation. Disordered regions lie at residues 784-807 and 844-893; these read QQSQ…RLSI and HVSE…CALL. 2 stretches are compositionally biased toward basic and acidic residues: residues 789-800 and 844-853; these read GGDDSHTPEHQR and HVSEDMDDKS. Positions 864–880 are enriched in low complexity; that stretch reads SVGRMSASSSTSSAGTV. Over residues 883–893 the composition is skewed to basic residues; the sequence is SKKRSKLCALL. Cys-890 is modified (cysteine methyl ester). Cys-890 carries S-farnesyl cysteine lipidation. Residues 891 to 893 constitute a propeptide, removed in mature form; sequence ALL.

Belongs to the cyclic nucleotide phosphodiesterase family. In terms of assembly, interacts with PrBP. A divalent metal cation serves as cofactor.

The protein localises to the cell membrane. The enzyme catalyses 3',5'-cyclic GMP + H2O = GMP + H(+). In terms of biological role, has a role regulating cGMP transport in Malpighian tubule principal cells. This is cGMP-specific 3',5'-cyclic phosphodiesterase from Drosophila virilis (Fruit fly).